Consider the following 231-residue polypeptide: uncharacterized protein (231 aa).

The next 4 membrane-spanning stretches (helical) occupy residues 39–59 (FCIS…YGPF), 70–90 (ALSL…VPVI), 156–176 (AIIS…GGSI), and 189–206 (IVAI…NMFF).

The protein belongs to the FliR/MopE/SpaR family.

The protein localises to the cell membrane. This is an uncharacterized protein from Escherichia coli (strain K12).